A 31-amino-acid polypeptide reads, in one-letter code: Protamine-1B (31 aa).

Residues 1-31 (MPRRRRASRRIRRRRRPRVSRRRRRGGRRRR) are disordered.

In terms of tissue distribution, testis.

It is found in the nucleus. The protein localises to the chromosome. Protamines substitute for histones in the chromatin of sperm during the haploid phase of spermatogenesis. They compact sperm DNA into a highly condensed, stable and inactive complex. This chain is Protamine-1B, found in Oncorhynchus mykiss (Rainbow trout).